The primary structure comprises 164 residues: NADPH-dependent 7-cyano-7-deazaguanine reductase (164 aa).

C55 acts as the Thioimide intermediate in catalysis. D62 acts as the Proton donor in catalysis. Substrate contacts are provided by residues 77 to 79 and 96 to 97; these read VES and HE.

This sequence belongs to the GTP cyclohydrolase I family. QueF type 1 subfamily.

The protein localises to the cytoplasm. The catalysed reaction is 7-aminomethyl-7-carbaguanine + 2 NADP(+) = 7-cyano-7-deazaguanine + 2 NADPH + 3 H(+). It participates in tRNA modification; tRNA-queuosine biosynthesis. Catalyzes the NADPH-dependent reduction of 7-cyano-7-deazaguanine (preQ0) to 7-aminomethyl-7-deazaguanine (preQ1). In Bacillus velezensis (strain DSM 23117 / BGSC 10A6 / LMG 26770 / FZB42) (Bacillus amyloliquefaciens subsp. plantarum), this protein is NADPH-dependent 7-cyano-7-deazaguanine reductase.